We begin with the raw amino-acid sequence, 362 residues long: Porin Omp2b (362 aa).

Residues 1 to 22 form the signal peptide; sequence MNIKSLLLGSAAALVAASGAQA.

This sequence belongs to the alphaproteobacteria porin family. As to quaternary structure, homotrimer.

The protein localises to the cell outer membrane. Functionally, forms passive diffusion pores that allow small molecular weight hydrophilic materials across the outer membrane. The chain is Porin Omp2b (omp2b) from Brucella suis biovar 1 (strain 1330).